The chain runs to 631 residues: Mini-chromosome maintenance complex-binding protein (631 aa).

2 stretches are compositionally biased toward polar residues: residues 148–157 and 173–192; these read ARVVPSTSYV and TQCQ…SESH. The segment at 148–218 is disordered; it reads ARVVPSTSYV…SSSSHCTSSL (71 aa). The span at 193-202 shows a compositional bias: basic and acidic residues; that stretch reads GNTEPKRQET. Residues 206 to 217 are compositionally biased toward low complexity; that stretch reads SQDSSSSHCTSS.

This sequence belongs to the MCMBP family. As to quaternary structure, interacts with the mcm complex: associates with the mcm3-7 complex which lacks mcm2, while it does not interact with the mcm complex when mcm2 is present (mcm2-7 complex).

It localises to the nucleus. Associated component of the mcm complex that acts as a regulator of DNA replication. Binds to the MCM complex during late S phase and promotes the disassembly of the mcm complex from chromatin, thereby acting as a key regulator of pre-replication complex (pre-RC) unloading from replicated DNA. Can dissociate the mcm complex without addition of ATP; probably acts by destabilizing interactions of each individual subunits of the mcm complex. Required for sister chromatid cohesion. The chain is Mini-chromosome maintenance complex-binding protein (mcmbp) from Danio rerio (Zebrafish).